A 320-amino-acid polypeptide reads, in one-letter code: D-alanine--D-alanine ligase (320 aa).

One can recognise an ATP-grasp domain in the interval 104–308 (KRVCLSHGVP…YEDLCVEILR (205 aa)). 134 to 189 (AAEFGMPLMLKAPHEGSTIGIAKVETAEGMQAGFDLCAKYDDVVLVEQFVKGRELT) lines the ATP pocket. Mg(2+) contacts are provided by D261, E275, and N277.

It belongs to the D-alanine--D-alanine ligase family. Requires Mg(2+) as cofactor. Mn(2+) is required as a cofactor.

It is found in the cytoplasm. The enzyme catalyses 2 D-alanine + ATP = D-alanyl-D-alanine + ADP + phosphate + H(+). It participates in cell wall biogenesis; peptidoglycan biosynthesis. In terms of biological role, cell wall formation. In Janthinobacterium sp. (strain Marseille) (Minibacterium massiliensis), this protein is D-alanine--D-alanine ligase.